The sequence spans 894 residues: Alpha-actinin-2 (894 aa).

The actin-binding stretch occupies residues 1–254 (MNQIEPGVQY…IMTYVSCFYH (254 aa)). Calponin-homology (CH) domains follow at residues 38 to 142 (KQQR…LRFA) and 151 to 257 (TSAK…HAFA). Residue T237 is modified to Phosphothreonine. 4 Spectrin repeats span residues 281–391 (RLME…WLLN), 401–506 (HLAE…ALER), 516–627 (QLHL…SLQE), and 637–740 (RLRR…EVET). 2 consecutive EF-hand domains span residues 753-788 (EQMNEFRASFNHFDRRKNGLMDHEDFRACLISMGYD) and 789-824 (LGEAEFARIMTLVDPNGQGTVTFQSFIDFMTRETAD). Residues D766, N770, D777, D802, N804, and T808 each coordinate Ca(2+).

The protein belongs to the alpha-actinin family. As to quaternary structure, homodimer; antiparallel. Also forms heterodimers with ACTN3. Interacts with ADAM12, MYOZ1, MYOZ2 and MYOZ3. Interacts via its C-terminal region with the LDB3 PDZ domain. Interacts with XIRP2. Interacts with DST (via N-terminus). Interacts with PARVB. Interacts with SYNPO2. In terms of processing, ubiquitinated by FBXL22, leading to proteasomal degradation.

The protein localises to the cytoplasm. The protein resides in the myofibril. Its subcellular location is the sarcomere. It is found in the z line. Functionally, F-actin cross-linking protein which is thought to anchor actin to a variety of intracellular structures. This is a bundling protein. The sequence is that of Alpha-actinin-2 (Actn2) from Mus musculus (Mouse).